Reading from the N-terminus, the 814-residue chain is MKVSQNWLKNLVEISSTPVDLSEKLSIGGFEVESLEDCSKNVNGVVLGKVLSVLKHDGSDKLSICQVDIGTSKNLQIICGARNIKPNVYVYVATVGAKLNAVDLTIKRSEIRGVMSEGMICSLQELGLEDSSEGIEIIDEDLALKHELGTPVSDLLQLNDFIYDLAITANRPDGMSVIGIAREISALLESKLSFPELNHKYNIHLNKGIKLCPEAITSNCIYTISCIDGVNGNKLSPIWLKDRIEKSGIKSINLLVDLTNYILLEQGQPLHAFDKEKLSNLIGKDVSPEDFSVRKAKDNESLVCLDGKKYELNENITVVTCSDKPVAIAGVIGGLETSVSNTTSSIYLEGAVFNPVTIRKSSKAVGIRTESSSRYEKGISSKNTISAVTRAMNLLEEYFSINLPIINTSNLKNNEDIFIKLRRSRIHKILGPLIINDQFEKRNISDTEIVDKLTLIGCSLKSKEYGWDVAVIPNRSQDLIREIDLIEEIARLIGYDRFDLNLPNPIKPGKLSSEQLALRKVKNGFTENGFNEVLSYSLVPEDKETLIKISNPLLLETSCLRDNIWKEHLEIVNRNIKAGQNSCYIFEIGNVFHKNTEFIQKEVLNGAIFGNKRFEKWVNSNKDNDLNYYQARGKLKEALSSLNIKIDDKPTDSIDFLHPGRTAKLIIEGKDAGYFGEIHPKLILEKKSLKIVYLFSINVDNLLGASTRKNKWIPIFKQYPIVPKIERDINFVFSKKFLISDITSLIKKTGKNLLEDVYLIDIFEDIKLGEDYISYTFRLSYRAQDKTLLDSDIKTIHSSIISNIEKSFQTKLRN.

In terms of domain architecture, tRNA-binding spans 39 to 153 (SKNVNGVVLG…LKHELGTPVS (115 aa)). The B5 domain maps to 414–500 (NEDIFIKLRR…RLIGYDRFDL (87 aa)). Mg(2+)-binding residues include Asp478, Asp484, Glu487, and Glu488. The FDX-ACB domain maps to 720–813 (PIVPKIERDI…IEKSFQTKLR (94 aa)).

This sequence belongs to the phenylalanyl-tRNA synthetase beta subunit family. Type 1 subfamily. As to quaternary structure, tetramer of two alpha and two beta subunits. It depends on Mg(2+) as a cofactor.

Its subcellular location is the cytoplasm. The enzyme catalyses tRNA(Phe) + L-phenylalanine + ATP = L-phenylalanyl-tRNA(Phe) + AMP + diphosphate + H(+). The chain is Phenylalanine--tRNA ligase beta subunit from Prochlorococcus marinus (strain MIT 9312).